A 520-amino-acid chain; its full sequence is Protein RCC2 (520 aa).

The interval 1–78 (MPRKKGAAWE…RPATAGKAAG (78 aa)) is disordered. Residue Ser-14 is modified to Phosphoserine. Thr-18 is subject to Phosphothreonine. Positions 22–34 (GPRRRGGPAGRKR) are enriched in basic residues. A phosphoserine mark is found at Ser-41, Ser-42, Ser-43, Ser-44, Ser-48, and Ser-49. Residues 69 to 78 (RPATAGKAAG) are compositionally biased toward low complexity. N6-acetyllysine is present on residues Lys-90 and Lys-122. 7 RCC1 repeats span residues 101 to 163 (KGQL…SLLI), 166 to 217 (EGKL…ALTD), 219 to 269 (GSVF…LMDC), 271 to 345 (GNLY…VLDS), 346 to 399 (QKRV…AVSE), 401 to 445 (GGLF…VAAD), and 446 to 499 (ESTI…VIAR). The residue at position 291 (Lys-291) is an N6-acetyllysine. Residues 316–323 (KTKDGQIL) form a required for interaction with RAC1 region. At Thr-340 the chain carries Phosphothreonine. Position 375 is an N6-acetyllysine (Lys-375).

In terms of assembly, interacts with RAC1. Interacts with nucleotide-free and with GDP and GTP-bound forms of RAC1, with a slight preference for GDP-bound RAC1. Binds preferentially to the nucleotide-free form of RAC1. Interacts with CORO1C. Interacts with microtubules.

Its subcellular location is the nucleus. The protein resides in the nucleolus. It is found in the cytoplasm. It localises to the cytoskeleton. The protein localises to the chromosome. Its subcellular location is the centromere. The protein resides in the spindle. It is found in the midbody. It localises to the cell membrane. Multifunctional protein that may affect its functions by regulating the activity of small GTPases, such as RAC1 and RALA. Required for normal progress through the cell cycle, both during interphase and during mitosis. Required for the presence of normal levels of MAD2L1, AURKB and BIRC5 on inner centromeres during mitosis, and for normal attachment of kinetochores to mitotic spindles. Required for normal organization of the microtubule cytoskeleton in interphase cells. Functions as a guanine nucleotide exchange factor (GEF) for RALA. Interferes with the activation of RAC1 by guanine nucleotide exchange factors. Prevents accumulation of active, GTP-bound RAC1, and suppresses RAC1-mediated reorganization of the actin cytoskeleton and formation of membrane protrusions. Required for normal cellular responses to contacts with the extracellular matrix of adjacent cells, and for directional cell migration in response to a fibronectin gradient (in vitro). This Mus musculus (Mouse) protein is Protein RCC2 (Rcc2).